Consider the following 848-residue polypeptide: Dolabradiene synthase KSL4, chloroplastic (848 aa).

The transit peptide at 1–64 (MASLSFASSH…SRMPRNVDTH (64 aa)) directs the protein to the chloroplast. Residues 148 to 168 (QRSDGSWGPDGGSGDHPSSPL) form a disordered region. Asp597, Asp601, Asn742, Ser746, and Glu750 together coordinate Mg(2+). The DDXXD motif motif lies at 597–601 (DDLFD).

Belongs to the terpene synthase family. It depends on Mg(2+) as a cofactor.

Its subcellular location is the plastid. It localises to the chloroplast. It carries out the reaction ent-copalyl diphosphate = dolabradiene + diphosphate. Its function is as follows. Involved in the production of antifungal dolabralexin phytoalexins in response to biotic and abiotic stresses. In response to fungal infection and in associtation with AN2, is involved in the production dolabradiene, a type of antifungal phytoalexin. Converts ent-copalyl disphosphate (ent-CPP) to dolabradiene. The polypeptide is Dolabradiene synthase KSL4, chloroplastic (Zea mays (Maize)).